The primary structure comprises 197 residues: dTTP/UTP pyrophosphatase (197 aa).

The active-site Proton acceptor is aspartate 70.

Belongs to the Maf family. YhdE subfamily. Requires a divalent metal cation as cofactor.

Its subcellular location is the cytoplasm. It carries out the reaction dTTP + H2O = dTMP + diphosphate + H(+). It catalyses the reaction UTP + H2O = UMP + diphosphate + H(+). Its function is as follows. Nucleoside triphosphate pyrophosphatase that hydrolyzes dTTP and UTP. May have a dual role in cell division arrest and in preventing the incorporation of modified nucleotides into cellular nucleic acids. The chain is dTTP/UTP pyrophosphatase from Yersinia pestis bv. Antiqua (strain Antiqua).